A 48-amino-acid chain; its full sequence is Large ribosomal subunit protein bL33A (48 aa).

This sequence belongs to the bacterial ribosomal protein bL33 family.

The sequence is that of Large ribosomal subunit protein bL33A from Streptococcus agalactiae serotype V (strain ATCC BAA-611 / 2603 V/R).